The primary structure comprises 54 residues: Protein YojO (54 aa).

It belongs to the YojO family.

The sequence is that of Protein YojO (yojO) from Escherichia coli (strain K12).